A 144-amino-acid polypeptide reads, in one-letter code: 3-hydroxyacyl-[acyl-carrier-protein] dehydratase FabZ (144 aa).

His-47 is an active-site residue.

The protein belongs to the thioester dehydratase family. FabZ subfamily.

The protein localises to the cytoplasm. The enzyme catalyses a (3R)-hydroxyacyl-[ACP] = a (2E)-enoyl-[ACP] + H2O. Functionally, involved in unsaturated fatty acids biosynthesis. Catalyzes the dehydration of short chain beta-hydroxyacyl-ACPs and long chain saturated and unsaturated beta-hydroxyacyl-ACPs. This Alcanivorax borkumensis (strain ATCC 700651 / DSM 11573 / NCIMB 13689 / SK2) protein is 3-hydroxyacyl-[acyl-carrier-protein] dehydratase FabZ.